A 188-amino-acid polypeptide reads, in one-letter code: Threonylcarbamoyl-AMP synthase (188 aa).

The 186-residue stretch at 3-188 folds into the YrdC-like domain; the sequence is QLHPSEIKDI…RSGKILRNGQ (186 aa).

It belongs to the SUA5 family. TsaC subfamily.

The protein resides in the cytoplasm. The catalysed reaction is L-threonine + hydrogencarbonate + ATP = L-threonylcarbamoyladenylate + diphosphate + H2O. Its function is as follows. Required for the formation of a threonylcarbamoyl group on adenosine at position 37 (t(6)A37) in tRNAs that read codons beginning with adenine. Catalyzes the conversion of L-threonine, HCO(3)(-)/CO(2) and ATP to give threonylcarbamoyl-AMP (TC-AMP) as the acyladenylate intermediate, with the release of diphosphate. This chain is Threonylcarbamoyl-AMP synthase, found in Shewanella sp. (strain MR-4).